The following is a 429-amino-acid chain: Adenylosuccinate synthetase (429 aa).

GTP-binding positions include 12-18 and 40-42; these read GDEGKGK and GHT. D13 acts as the Proton acceptor in catalysis. Residues D13 and G40 each coordinate Mg(2+). Residues 13 to 16, 38 to 41, T128, R142, Q223, T238, and R302 each bind IMP; these read DEGK and NAGH. The Proton donor role is filled by H41. A substrate-binding site is contributed by 298–304; that stretch reads ATTGRKR. GTP contacts are provided by residues R304, 330–332, and 412–414; these read KLD and GTG.

It belongs to the adenylosuccinate synthetase family. Homodimer. Requires Mg(2+) as cofactor.

Its subcellular location is the cytoplasm. It carries out the reaction IMP + L-aspartate + GTP = N(6)-(1,2-dicarboxyethyl)-AMP + GDP + phosphate + 2 H(+). Its pathway is purine metabolism; AMP biosynthesis via de novo pathway; AMP from IMP: step 1/2. In terms of biological role, plays an important role in the de novo pathway of purine nucleotide biosynthesis. Catalyzes the first committed step in the biosynthesis of AMP from IMP. The sequence is that of Adenylosuccinate synthetase from Tropheryma whipplei (strain TW08/27) (Whipple's bacillus).